Here is a 379-residue protein sequence, read N- to C-terminus: Proton extrusion protein PxcA (379 aa).

4 helical membrane passes run 153–173, 254–274, 300–320, and 337–357; these read TLVS…LQQI, AIKN…VCLF, FVII…GWTV, and FIDL…KYWI.

It belongs to the CemA family.

It is found in the cell inner membrane. In terms of biological role, required for H(+) efflux immediately after light irradiation to form a rapid H(+) concentration gradient across the thylakoid membranes. Together with PxcL, contributes to transient H(+) uptake following dark to light transition. The protein is Proton extrusion protein PxcA of Synechococcus sp. (strain RCC307).